Here is a 115-residue protein sequence, read N- to C-terminus: NADH-ubiquinone oxidoreductase chain 3 (115 aa).

Helical transmembrane passes span 4-24, 55-75, and 84-104; these read IVIL…AFWL, FFLI…LLPL, and TYFT…GLMY.

Belongs to the complex I subunit 3 family. As to quaternary structure, core subunit of respiratory chain NADH dehydrogenase (Complex I) which is composed of 45 different subunits. Interacts with TMEM186. Interacts with TMEM242.

It is found in the mitochondrion inner membrane. It carries out the reaction a ubiquinone + NADH + 5 H(+)(in) = a ubiquinol + NAD(+) + 4 H(+)(out). Its function is as follows. Core subunit of the mitochondrial membrane respiratory chain NADH dehydrogenase (Complex I) which catalyzes electron transfer from NADH through the respiratory chain, using ubiquinone as an electron acceptor. Essential for the catalytic activity of complex I. The protein is NADH-ubiquinone oxidoreductase chain 3 of Eligmodontia typus (Highland gerbil mouse).